A 159-amino-acid polypeptide reads, in one-letter code: Cytochrome c-type biogenesis protein CcmE (159 aa).

The Cytoplasmic portion of the chain corresponds to 1–8 (MNPRRKKR). A helical; Signal-anchor for type II membrane protein membrane pass occupies residues 9-29 (LLVIVAVLFGIGASIGLVLYA). Over 30–159 (LQENINLFYT…KPKYNLDSGN (130 aa)) the chain is Periplasmic. Positions 130 and 134 each coordinate heme.

It belongs to the CcmE/CycJ family.

It is found in the cell inner membrane. In terms of biological role, heme chaperone required for the biogenesis of c-type cytochromes. Transiently binds heme delivered by CcmC and transfers the heme to apo-cytochromes in a process facilitated by CcmF and CcmH. This is Cytochrome c-type biogenesis protein CcmE from Pseudoalteromonas translucida (strain TAC 125).